Here is a 193-residue protein sequence, read N- to C-terminus: ATP-dependent Clp protease proteolytic subunit (193 aa).

Ser-98 serves as the catalytic Nucleophile. Residue His-123 is part of the active site.

Belongs to the peptidase S14 family. As to quaternary structure, fourteen ClpP subunits assemble into 2 heptameric rings which stack back to back to give a disk-like structure with a central cavity, resembling the structure of eukaryotic proteasomes.

It localises to the cytoplasm. It carries out the reaction Hydrolysis of proteins to small peptides in the presence of ATP and magnesium. alpha-casein is the usual test substrate. In the absence of ATP, only oligopeptides shorter than five residues are hydrolyzed (such as succinyl-Leu-Tyr-|-NHMec, and Leu-Tyr-Leu-|-Tyr-Trp, in which cleavage of the -Tyr-|-Leu- and -Tyr-|-Trp bonds also occurs).. Its function is as follows. Cleaves peptides in various proteins in a process that requires ATP hydrolysis. Has a chymotrypsin-like activity. Plays a major role in the degradation of misfolded proteins. The chain is ATP-dependent Clp protease proteolytic subunit from Mannheimia succiniciproducens (strain KCTC 0769BP / MBEL55E).